A 176-amino-acid polypeptide reads, in one-letter code: Lipoprotein signal peptidase (176 aa).

4 helical membrane passes run 26-46, 60-80, 82-102, and 107-127; these read LWMA…IVIV, FFNL…ADAG, WQRW…VWLL, and GQKL…GNVV. Residues Asp137 and Asp155 contribute to the active site. The chain crosses the membrane as a helical span at residues 147–167; the sequence is HWPAFNVADCAITVGAVLLIV.

This sequence belongs to the peptidase A8 family.

The protein resides in the cell inner membrane. The catalysed reaction is Release of signal peptides from bacterial membrane prolipoproteins. Hydrolyzes -Xaa-Yaa-Zaa-|-(S,diacylglyceryl)Cys-, in which Xaa is hydrophobic (preferably Leu), and Yaa (Ala or Ser) and Zaa (Gly or Ala) have small, neutral side chains.. It functions in the pathway protein modification; lipoprotein biosynthesis (signal peptide cleavage). Functionally, this protein specifically catalyzes the removal of signal peptides from prolipoproteins. In Cupriavidus pinatubonensis (strain JMP 134 / LMG 1197) (Cupriavidus necator (strain JMP 134)), this protein is Lipoprotein signal peptidase.